Here is a 467-residue protein sequence, read N- to C-terminus: DNA polymerase IV (467 aa).

Residues 5-187 enclose the UmuC domain; the sequence is VLHIDMDAFF…LPVGALWGVG (183 aa). Aspartate 9 and aspartate 104 together coordinate Mg(2+). Residue glutamate 105 is part of the active site. Disordered stretches follow at residues 364-383 and 429-449; these read PDTD…STQV and KGRT…DPLD.

Belongs to the DNA polymerase type-Y family. Monomer. Mg(2+) serves as cofactor.

The protein resides in the cytoplasm. The catalysed reaction is DNA(n) + a 2'-deoxyribonucleoside 5'-triphosphate = DNA(n+1) + diphosphate. Its function is as follows. Poorly processive, error-prone DNA polymerase involved in untargeted mutagenesis. Copies undamaged DNA at stalled replication forks, which arise in vivo from mismatched or misaligned primer ends. These misaligned primers can be extended by PolIV. Exhibits no 3'-5' exonuclease (proofreading) activity. May be involved in translesional synthesis, in conjunction with the beta clamp from PolIII. This is DNA polymerase IV from Corynebacterium glutamicum (strain ATCC 13032 / DSM 20300 / JCM 1318 / BCRC 11384 / CCUG 27702 / LMG 3730 / NBRC 12168 / NCIMB 10025 / NRRL B-2784 / 534).